The primary structure comprises 617 residues: Leucine aminopeptidase 2 (617 aa).

Residues 139 to 141 (QCQ) and 271 to 276 (PYGGME) contribute to the a peptide site. Histidine 300 lines the Zn(2+) pocket. The Proton acceptor role is filled by glutamate 301. Zn(2+)-binding residues include histidine 304 and glutamate 323. Tyrosine 388 (proton donor) is an active-site residue.

The protein belongs to the peptidase M1 family. Requires Zn(2+) as cofactor.

Its subcellular location is the cytoplasm. The protein localises to the nucleus. The catalysed reaction is an epoxide + H2O = an ethanediol. In terms of biological role, aminopeptidase that preferentially cleaves di- and tripeptides. Also has low epoxide hydrolase activity (in vitro). Can hydrolyze the epoxide leukotriene LTA(4) but it forms preferentially 5,6-dihydroxy-7,9,11,14-eicosatetraenoic acid rather than the cytokine leukotriene B(4) as the product compared to the homologous mammalian enzyme (in vitro). The sequence is that of Leucine aminopeptidase 2 from Aspergillus terreus (strain NIH 2624 / FGSC A1156).